The primary structure comprises 120 residues: Immunoglobulin lambda variable 4-60 (120 aa).

The first 21 residues, 1–21, serve as a signal peptide directing secretion; it reads MAWTPLLLLFPLLLHCTGSLS. Residues 22-46 are framework-1; it reads QPVLTQSSSASASLGSSVKLTCTLS. The 98-residue stretch at 23-120 folds into the Ig-like domain; that stretch reads PVLTQSSSAS…YYCETWDSNT (98 aa). An intrachain disulfide couples cysteine 43 to cysteine 113. The tract at residues 47–53 is complementarity-determining-1; it reads SGHSSYI. The segment at 54–70 is framework-2; sequence IAWHQQQPGKAPRYLMK. Residues 71-77 form a complementarity-determining-2 region; it reads LEGSGSY. A framework-3 region spans residues 78 to 113; it reads NKGSGVPDRFSGSSSGADRYLTISNLQFEDEADYYC. The segment at 114 to 120 is complementarity-determining-3; sequence ETWDSNT.

Immunoglobulins are composed of two identical heavy chains and two identical light chains; disulfide-linked.

The protein resides in the secreted. It is found in the cell membrane. V region of the variable domain of immunoglobulin light chains that participates in the antigen recognition. Immunoglobulins, also known as antibodies, are membrane-bound or secreted glycoproteins produced by B lymphocytes. In the recognition phase of humoral immunity, the membrane-bound immunoglobulins serve as receptors which, upon binding of a specific antigen, trigger the clonal expansion and differentiation of B lymphocytes into immunoglobulins-secreting plasma cells. Secreted immunoglobulins mediate the effector phase of humoral immunity, which results in the elimination of bound antigens. The antigen binding site is formed by the variable domain of one heavy chain, together with that of its associated light chain. Thus, each immunoglobulin has two antigen binding sites with remarkable affinity for a particular antigen. The variable domains are assembled by a process called V-(D)-J rearrangement and can then be subjected to somatic hypermutations which, after exposure to antigen and selection, allow affinity maturation for a particular antigen. The protein is Immunoglobulin lambda variable 4-60 of Homo sapiens (Human).